The following is a 236-amino-acid chain: Orotidine 5'-phosphate decarboxylase (236 aa).

Residues aspartate 16, lysine 38, 65-74 (DLKLHDIGNT), threonine 123, arginine 184, glutamine 193, glycine 213, and arginine 214 contribute to the substrate site. Lysine 67 acts as the Proton donor in catalysis.

This sequence belongs to the OMP decarboxylase family. Type 1 subfamily. In terms of assembly, homodimer.

The enzyme catalyses orotidine 5'-phosphate + H(+) = UMP + CO2. It functions in the pathway pyrimidine metabolism; UMP biosynthesis via de novo pathway; UMP from orotate: step 2/2. Its function is as follows. Catalyzes the decarboxylation of orotidine 5'-monophosphate (OMP) to uridine 5'-monophosphate (UMP). The chain is Orotidine 5'-phosphate decarboxylase from Methylobacterium sp. (strain 4-46).